We begin with the raw amino-acid sequence, 107 residues long: Phosphoribosyl-ATP pyrophosphatase (107 aa).

This sequence belongs to the PRA-PH family.

It is found in the cytoplasm. The catalysed reaction is 1-(5-phospho-beta-D-ribosyl)-ATP + H2O = 1-(5-phospho-beta-D-ribosyl)-5'-AMP + diphosphate + H(+). Its pathway is amino-acid biosynthesis; L-histidine biosynthesis; L-histidine from 5-phospho-alpha-D-ribose 1-diphosphate: step 2/9. This is Phosphoribosyl-ATP pyrophosphatase from Bacillus thuringiensis (strain Al Hakam).